The chain runs to 141 residues: MRIPPRLVALAGAAAVAATLIAGPVAAAAPASHAVAASSAASASVKAVGRVCYSALPSQAHDTLDLIDEGGPFPYSQDGVVFQNREGLLPAHSTGYYHEYTVITPGSPTRGARRIITGQQWQEDYYTADHYASFRRVDFAC.

Residues 1 to 36 (MRIPPRLVALAGAAAVAATLIAGPVAAAAPASHAVA) constitute a signal peptide (or 43). Cysteine 52 and cysteine 141 are disulfide-bonded. The Proton acceptor role is filled by glutamate 99. Histidine 130 functions as the Proton donor in the catalytic mechanism.

It belongs to the ribonuclease N1/T1 family.

Its subcellular location is the secreted. The catalysed reaction is [RNA] containing guanosine + H2O = an [RNA fragment]-3'-guanosine-3'-phosphate + a 5'-hydroxy-ribonucleotide-3'-[RNA fragment].. The polypeptide is Guanyl-specific ribonuclease Sa3 (rnaSA3) (Kitasatospora aureofaciens (Streptomyces aureofaciens)).